Here is a 600-residue protein sequence, read N- to C-terminus: tRNA uridine 5-carboxymethylaminomethyl modification enzyme MnmG (600 aa).

10–15 contacts FAD; that stretch reads GGGHAG. Positions 216-239 are disordered; that stretch reads ADPQPRGFTGTPGPRAAESPTWQT. 267-281 lines the NAD(+) pocket; that stretch reads GPRYCPSIEDKVVKF.

It belongs to the MnmG family. In terms of assembly, homodimer. Heterotetramer of two MnmE and two MnmG subunits. The cofactor is FAD.

The protein localises to the cytoplasm. Its function is as follows. NAD-binding protein involved in the addition of a carboxymethylaminomethyl (cmnm) group at the wobble position (U34) of certain tRNAs, forming tRNA-cmnm(5)s(2)U34. The protein is tRNA uridine 5-carboxymethylaminomethyl modification enzyme MnmG of Deinococcus radiodurans (strain ATCC 13939 / DSM 20539 / JCM 16871 / CCUG 27074 / LMG 4051 / NBRC 15346 / NCIMB 9279 / VKM B-1422 / R1).